The following is a 101-amino-acid chain: YcgL domain-containing protein ACIAD2309 (101 aa).

Positions 1–93 (MHCDIYRSSK…PPEGFINPSD (93 aa)) constitute a YcgL domain.

The sequence is that of YcgL domain-containing protein ACIAD2309 from Acinetobacter baylyi (strain ATCC 33305 / BD413 / ADP1).